Here is a 161-residue protein sequence, read N- to C-terminus: Cyclic pyranopterin monophosphate synthase (161 aa).

Substrate is bound by residues 75–77 (LCH) and 113–114 (ME). Residue Asp128 is part of the active site.

It belongs to the MoaC family. Homohexamer; trimer of dimers.

The enzyme catalyses (8S)-3',8-cyclo-7,8-dihydroguanosine 5'-triphosphate = cyclic pyranopterin phosphate + diphosphate. It participates in cofactor biosynthesis; molybdopterin biosynthesis. Its function is as follows. Catalyzes the conversion of (8S)-3',8-cyclo-7,8-dihydroguanosine 5'-triphosphate to cyclic pyranopterin monophosphate (cPMP). This chain is Cyclic pyranopterin monophosphate synthase, found in Edwardsiella ictaluri (strain 93-146).